The following is a 184-amino-acid chain: Tumor necrosis factor alpha-induced protein 8-like protein 2 (184 aa).

The residue at position 3 (Ser3) is a Phosphoserine.

The protein belongs to the TNFAIP8 family. TNFAIP8L2 subfamily. In terms of assembly, may interact with CASP8; however, such result is unclear since could not reproduce the interaction with CASP8. Interacts with RAC1. Phosphorylated by TAK1/MAP3K7; this phosphorylation triggers association with BTRC and subsequent ubiquitination and degradation. Post-translationally, ubiquitinated in a BTRC-depdent manner; leading to degradation mediated through the proteasome pathway.

Its subcellular location is the cytoplasm. The protein resides in the nucleus. It localises to the lysosome. Its function is as follows. Acts as a negative regulator of innate and adaptive immunity by maintaining immune homeostasis. Plays a regulatory role in the Toll-like signaling pathway by determining the strength of LPS-induced signaling and gene expression. Inhibits TCR-mediated T-cell activation and negatively regulate T-cell function to prevent hyperresponsiveness. Also inhibits autolysosome formation via negatively modulating MTOR activation by interacting with RAC1 and promoting the disassociation of the RAC1-MTOR complex. Plays an essential role in NK-cell biology by acting as a checkpoint and displaying an expression pattern correlating with NK-cell maturation process and by negatively regulating NK-cell maturation and antitumor immunity. Mechanistically, suppresses IL-15-triggered mTOR activity in NK-cells. This Rattus norvegicus (Rat) protein is Tumor necrosis factor alpha-induced protein 8-like protein 2 (Tnfaip8l2).